The primary structure comprises 524 residues: Thermosome subunit 3 (524 aa).

The protein belongs to the TCP-1 chaperonin family. The thermosome or CCT complex is a oligomeric complex of two octameric double-ring structures; the complex is probably a heterooligomer of CCT1, CCT2 and CCT3 with yet unknown stoichiometry.

Molecular chaperone that assists in the folding or refolding of nascent or denatured proteins along with ATP hydrolysis. ATPase activity is highest in thermosome assemblies containing CCT1:CCT2, followed by assemblies containing CCT1:CCT2:CCT3. Not required for thermosome ATPase activity. Not required for growth. This chain is Thermosome subunit 3 (cct3), found in Haloferax volcanii (strain ATCC 29605 / DSM 3757 / JCM 8879 / NBRC 14742 / NCIMB 2012 / VKM B-1768 / DS2) (Halobacterium volcanii).